Consider the following 246-residue polypeptide: uncharacterized protein (246 aa).

This sequence belongs to the IIV-6 170L family.

This is an uncharacterized protein from Acheta domesticus (House cricket).